We begin with the raw amino-acid sequence, 351 residues long: Putative aminodehydroquinate synthase (351 aa).

NAD(+)-binding positions include 65–68, 97–101, 121–122, K134, K143, and 161–164; these read EPTK, GTTTD, TS, and YLTT. Residues E176, H225, and H241 each coordinate Zn(2+).

Belongs to the sugar phosphate cyclases superfamily. aDHQS family. It depends on NAD(+) as a cofactor. Co(2+) is required as a cofactor. The cofactor is Zn(2+).

Functionally, may catalyze the conversion of 3,4-dideoxy-4-amino-D-arabino-heptulosonate 7-phosphate (aDAHP) to 5-deoxy-5-amino-3-dehydroquinate (aDHQ). Probably involved in the formation of 3-amino-5-hydroxybenzoic acid (AHBA), the precursor of rifamycin and related ansamycins. This is Putative aminodehydroquinate synthase from Amycolatopsis mediterranei (strain S699) (Nocardia mediterranei).